A 468-amino-acid chain; its full sequence is Protein translocase subunit SecY (468 aa).

The Cytoplasmic portion of the chain corresponds to 1–20 (MGARDVIYAMEKWFPEVERP). Residues 21–47 (KKHVPLKEKFVWTGLALVLYYVLAEIP) traverse the membrane as a helical segment. Residues 48 to 58 (VYGIPKKIQDY) are Extracellular-facing. An intramembrane region (helical) is located at residues 59-66 (FQFLRVVL). A discontinuously helical transmembrane segment spans residues 59–87 (FQFLRVVLAGRNGSILTLGIGPIVTAGII). The stretch at 67–78 (AGRNGSILTLGI) is an intramembrane region. The segment at residues 79-87 (GPIVTAGII) is an intramembrane region (helical). Topologically, residues 88–108 (LQLLVGSELIRLDLANPEDRR) are cytoplasmic. A helical membrane pass occupies residues 109-133 (FYQALQRVFSVFMCFFEAAIWVLGG). The Extracellular segment spans residues 134–144 (AFGRVGVDVTY). The chain crosses the membrane as a helical span at residues 145-169 (TIATLMIIQLALGGIILIVLDELVS). Residues 170-175 (KWGIGS) are Cytoplasmic-facing. The helical transmembrane segment at 176–194 (GISLFIAAGVSQRILTRSL) threads the bilayer. The Extracellular portion of the chain corresponds to 195 to 239 (NPLTDPNIIDPLTGKPAIVGAIPYFIQHILDGDLKGALYRGGSAP). A helical transmembrane segment spans residues 240–261 (DMIAVTATIIVFLVVVYFESMR). At 262 to 285 (VEIPLGYRGVTIRGRYPIKFLYVS) the chain is on the cytoplasmic side. The chain crosses the membrane as a helical span at residues 286–307 (NIPIILTFALYANIQLWARVLD). The Extracellular portion of the chain corresponds to 308–346 (RFGHPWLGRFDPVTGNPIGGFVLYVIPPRNIFTVIDNPV). The chain crosses the membrane as a helical span at residues 347-366 (RAIIYLILTIIFSLLFGFLW). Topologically, residues 367-409 (VELTGLDARTIARQLQRAGLQIPGFRRDPRTLERVLQKYIPYV) are cytoplasmic. A helical membrane pass occupies residues 410–428 (TFWGSLTVALISVLADFLG). The Extracellular portion of the chain corresponds to 429-431 (ALG). Residues 432-446 (TGTGILLTVGILYRF) form a helical membrane-spanning segment. The Cytoplasmic segment spans residues 447-468 (YEEIAREQITEMFPALRRLFKG).

The protein belongs to the SecY/SEC61-alpha family. Component of the Sec protein translocase complex. Heterotrimer consisting of alpha (SecY), beta (SecG) and gamma (SecE) subunits. The heterotrimers can form oligomers, although 1 heterotrimer is thought to be able to translocate proteins. Interacts with the ribosome. May interact with SecDF, and other proteins may be involved.

Its subcellular location is the cell membrane. Functionally, the central subunit of the protein translocation channel SecYEG. Consists of two halves formed by TMs 1-5 and 6-10. These two domains form a lateral gate at the front which open onto the bilayer between TMs 2 and 7, and are clamped together by SecE at the back. The channel is closed by both a pore ring composed of hydrophobic SecY resides and a short helix (helix 2A) on the extracellular side of the membrane which forms a plug. The plug probably moves laterally to allow the channel to open. The ring and the pore may move independently. The protein is Protein translocase subunit SecY of Pyrococcus horikoshii (strain ATCC 700860 / DSM 12428 / JCM 9974 / NBRC 100139 / OT-3).